Reading from the N-terminus, the 293-residue chain is 4-hydroxybenzoate octaprenyltransferase (293 aa).

Helical transmembrane passes span 25–45 (IGNF…AKGL), 48–68 (LKVL…GCVI), 101–121 (LFVV…PLTI), 142–162 (HFPQ…AFAA), 165–185 (GAVA…ATIY), 223–243 (VMLA…FWYL), and 271–291 (FLNN…DLHL).

The protein belongs to the UbiA prenyltransferase family. Mg(2+) serves as cofactor.

It localises to the cell inner membrane. It catalyses the reaction all-trans-octaprenyl diphosphate + 4-hydroxybenzoate = 4-hydroxy-3-(all-trans-octaprenyl)benzoate + diphosphate. Its pathway is cofactor biosynthesis; ubiquinone biosynthesis. Catalyzes the prenylation of para-hydroxybenzoate (PHB) with an all-trans polyprenyl group. Mediates the second step in the final reaction sequence of ubiquinone-8 (UQ-8) biosynthesis, which is the condensation of the polyisoprenoid side chain with PHB, generating the first membrane-bound Q intermediate 3-octaprenyl-4-hydroxybenzoate. In Alkalilimnicola ehrlichii (strain ATCC BAA-1101 / DSM 17681 / MLHE-1), this protein is 4-hydroxybenzoate octaprenyltransferase.